A 385-amino-acid chain; its full sequence is MTQAFNERIVQALKQRREQGLNRQSEVIFSGNQTVLEHQGKRYLNFSANDYLGLANDQSLVRAWQQGLSLYGCGSGASPLVTGYTPAHSNLAASLCDWLGYESATLFGSGFSANQALLFALLEKGDLLVQDKLNHASLIEAGLLSPASMKRFKHNDLQALDAILNRSDCPSLVVTEGVFSMDGDCSPLAEMHALTQRYSASLMVDDAHGVGVLGEEGRGSCALASVKPDFLVVTFGKAFGLSGAALLTDKSSGDFLAQFARHHVYSTALPPAQAFALTHAVEMIRTQQWRRDKLNELQTLFAEYLGEHDSFVATQTPIKPWLIGETQQAVMVAQRCREQGIWLTAIRPPTVPQNTARLRITLSANHTKEQMHTLAQVLLTVTGEH.

Residue Arg-23 coordinates substrate. Residue 110–111 coordinates pyridoxal 5'-phosphate; that stretch reads GF. Substrate is bound at residue His-135. Residues Ser-180, His-208, and Thr-234 each coordinate pyridoxal 5'-phosphate. Position 237 is an N6-(pyridoxal phosphate)lysine (Lys-237). Substrate is bound at residue Thr-350.

It belongs to the class-II pyridoxal-phosphate-dependent aminotransferase family. BioF subfamily. Homodimer. The cofactor is pyridoxal 5'-phosphate.

It catalyses the reaction 6-carboxyhexanoyl-[ACP] + L-alanine + H(+) = (8S)-8-amino-7-oxononanoate + holo-[ACP] + CO2. It participates in cofactor biosynthesis; biotin biosynthesis. Catalyzes the decarboxylative condensation of pimeloyl-[acyl-carrier protein] and L-alanine to produce 8-amino-7-oxononanoate (AON), [acyl-carrier protein], and carbon dioxide. In Vibrio vulnificus (strain YJ016), this protein is 8-amino-7-oxononanoate synthase.